The chain runs to 620 residues: Probable serine/threonine-protein kinase RTK1 (620 aa).

5 disordered regions span residues 1-20 (MVKE…SLFR), 29-130 (AKIF…PVRT), 153-186 (KDAF…SNLS), 210-237 (QAST…KKKS), and 252-271 (HDNH…TKPK). A compositionally biased stretch (low complexity) spans 7–18 (LHSSSSTSLSSL). Residues 56–76 (KNTDSDQEDQIKYNKPNDRRS) are compositionally biased toward basic and acidic residues. Position 58 is a phosphothreonine (T58). Phosphoserine is present on S60. Polar residues-rich tracts occupy residues 95–107 (VASS…SPTS), 165–186 (TAHS…SNLS), and 210–222 (QAST…LQHN). S216 bears the Phosphoserine mark. A compositionally biased stretch (basic residues) spans 254–263 (NHHHHHHHNR). Positions 302–575 (GIPGRKLGEG…MNDVVKDDWL (274 aa)) constitute a Protein kinase domain. ATP contacts are provided by residues 308–316 (LGEGASGSV) and K330. K334 is covalently cross-linked (Glycyl lysine isopeptide (Lys-Gly) (interchain with G-Cter in ubiquitin)). D430 (proton acceptor) is an active-site residue.

The protein belongs to the protein kinase superfamily. Ser/Thr protein kinase family. As to quaternary structure, interacts with ribosome biogenesis factors ARC1, CKA2 and GUS1.

The enzyme catalyses L-seryl-[protein] + ATP = O-phospho-L-seryl-[protein] + ADP + H(+). It catalyses the reaction L-threonyl-[protein] + ATP = O-phospho-L-threonyl-[protein] + ADP + H(+). In terms of biological role, probable serine/threonine-protein kinase that may be involved in ribosome biogenesis. This chain is Probable serine/threonine-protein kinase RTK1 (RTK1), found in Saccharomyces cerevisiae (strain ATCC 204508 / S288c) (Baker's yeast).